The primary structure comprises 238 residues: 2-C-methyl-D-erythritol 4-phosphate cytidylyltransferase (238 aa).

The protein belongs to the IspD/TarI cytidylyltransferase family. IspD subfamily.

The catalysed reaction is 2-C-methyl-D-erythritol 4-phosphate + CTP + H(+) = 4-CDP-2-C-methyl-D-erythritol + diphosphate. It participates in isoprenoid biosynthesis; isopentenyl diphosphate biosynthesis via DXP pathway; isopentenyl diphosphate from 1-deoxy-D-xylulose 5-phosphate: step 2/6. Functionally, catalyzes the formation of 4-diphosphocytidyl-2-C-methyl-D-erythritol from CTP and 2-C-methyl-D-erythritol 4-phosphate (MEP). In Leptospira interrogans serogroup Icterohaemorrhagiae serovar copenhageni (strain Fiocruz L1-130), this protein is 2-C-methyl-D-erythritol 4-phosphate cytidylyltransferase.